The following is a 501-amino-acid chain: L-ornithine N(5)-monooxygenase (501 aa).

Over residues 1-16 the composition is skewed to low complexity; it reads MNGTSTTGNGFTNGTN. The interval 1 to 40 is disordered; that stretch reads MNGTSTTGNGFTNGTNYPVPKLELQPETTSTSPTRAQTHP. Polar residues predominate over residues 26–37; it reads PETTSTSPTRAQ. Residues 92–100 and Gln111 contribute to the FAD site; that span reads EKQSNFAWH. Substrate is bound at residue Lys116. Val177 is an FAD binding site. An NADP(+)-binding site is contributed by 263-266; it reads SGQS. Substrate is bound by residues 304–307 and Asn334; that span reads NELF. 334–336 provides a ligand contact to NADP(+); sequence NYS. 476–478 lines the FAD pocket; that stretch reads SLL. Ser479 lines the substrate pocket.

It belongs to the lysine N(6)-hydroxylase/L-ornithine N(5)-oxygenase family. As to quaternary structure, homotetramer. FAD is required as a cofactor.

It carries out the reaction L-ornithine + NADPH + O2 = N(5)-hydroxy-L-ornithine + NADP(+) + H2O. The enzyme catalyses L-ornithine + NADH + O2 = N(5)-hydroxy-L-ornithine + NAD(+) + H2O. It participates in siderophore biosynthesis. L-ornithine N(5)-monooxygenase; part of the siderophore biosynthetic pathway. Arthroderma benhamiae produces 2 types of extracellular siderophores, ferrichrome C and ferricrocin. The biosynthesis of these siderophores depends on the hydroxylation of ornithine to N(5)-hydroxyornithine, catalyzed by the monooxygenase sidA. The structure of ferricrocin differs from ferrichrome C only by a serine for alanine substitution and the assembly of both siderophores is suggested to be performed by the nonribosomal peptide synthase (NRPS) sidC. The polypeptide is L-ornithine N(5)-monooxygenase (Arthroderma benhamiae (strain ATCC MYA-4681 / CBS 112371) (Trichophyton mentagrophytes)).